Reading from the N-terminus, the 822-residue chain is Cadherin-3 (822 aa).

Residues 1-25 (MELLSGPHAFLLLLLQVCWLRSVVS) form the signal peptide. Residues 26 to 99 (EPYRAGFIGE…PTRILRRRKR (74 aa)) constitute a propeptide that is removed on maturation. Cadherin domains lie at 100–207 (EWVM…KPKF), 208–320 (TQDT…APEF), 321–432 (EPQK…APVF), 433–538 (VPPS…DHGP), and 539–645 (IPEP…RPWK). Over 100–647 (EWVMPPIFVP…NDCPRPWKGG (548 aa)) the chain is Extracellular. N-linked (GlcNAc...) asparagine glycosylation occurs at Asn-192. Residue Asn-558 is glycosylated (N-linked (GlcNAc...) asparagine). The helical transmembrane segment at 648 to 670 (FILPILGAVLALLTLLLALLLLV) threads the bilayer. At 671-822 (RKKRKVKEPL…ADMYGGGEDD (152 aa)) the chain is on the cytoplasmic side.

Interacts with CDCP1 and CTNNB1.

The protein localises to the cell membrane. In terms of biological role, cadherins are calcium-dependent cell adhesion proteins. They preferentially interact with themselves in a homophilic manner in connecting cells; cadherins may thus contribute to the sorting of heterogeneous cell types. This chain is Cadherin-3 (Cdh3), found in Mus musculus (Mouse).